The chain runs to 309 residues: Agglutinin (309 aa).

Residue methionine 1 is modified to N-acetylmethionine. Jacalin-type lectin domains lie at 4-148 (FLTV…YVKI) and 163-308 (PRGP…HMEY).

It belongs to the jacalin lectin family.

D-mannose/D-glucose-binding lectin. Binds N-linked high-mannose-type glycans. Has a preference for smaller (Man(2)-Man(6)) high-mannose-type glycans to larger (Man(7)-Man(9)) ones. Recognizes both alpha1-6 extended and alpha1-3 extended monoantennary glycans. The addition of alpha1-2Man to the Man-alpha1-3Man-beta branch results in a significant loss of affinity, but beta1-2GlcNAc has some affinity. Has less affinity for biantennary glycans, and affinity is very weak for the biantennary complex-type N-glycans with bisecting GlcNAc. No affinity is observed for tri- and tetra-antennary glycans. Has mitogenic and hemagglutinating activities. This chain is Agglutinin, found in Castanea crenata (Japanese chestnut).